Consider the following 323-residue polypeptide: uncharacterized protein (323 aa).

This is an uncharacterized protein from Treponema pallidum (strain Nichols).